The sequence spans 116 residues: Histone H2B (116 aa).

A compositionally biased stretch (basic residues) spans 1 to 11 (TSGKAAKKAGK). A disordered region spans residues 1–25 (TSGKAAKKAGKAQKSITKGDKKKRK). N6-acetyllysine is present on residues Lys-4, Lys-11, and Lys-14. Ser-103 carries O-linked (GlcNAc) serine glycosylation. Lys-111 participates in a covalent cross-link: Glycyl lysine isopeptide (Lys-Gly) (interchain with G-Cter in ubiquitin).

The nucleosome is a histone octamer containing two molecules each of H2A, H2B, H3 and H4 assembled in one H3-H4 heterotetramer and two H2A-H2B heterodimers. The octamer wraps approximately 147 bp of DNA. In terms of processing, monoubiquitination gives a specific tag for epigenetic transcriptional activation and is also prerequisite for histone H3 'Lys-4' and 'Lys-79' methylation. Post-translationally, glcNAcylation at Ser-103 promotes monoubiquitination of Lys-111. It fluctuates in response to extracellular glucose, and associates with transcribed genes.

It is found in the nucleus. The protein localises to the chromosome. Functionally, core component of nucleosome. Nucleosomes wrap and compact DNA into chromatin, limiting DNA accessibility to the cellular machineries which require DNA as a template. Histones thereby play a central role in transcription regulation, DNA repair, DNA replication and chromosomal stability. DNA accessibility is regulated via a complex set of post-translational modifications of histones, also called histone code, and nucleosome remodeling. Its function is as follows. A mixture of histones H2B and H4 has antimicrobial activity against the Gram-positive bacterium M.luteus. In Penaeus vannamei (Whiteleg shrimp), this protein is Histone H2B.